We begin with the raw amino-acid sequence, 98 residues long: Integration host factor subunit alpha (98 aa).

Positions 52-73 (FDLRQKSERPGRNPKTGEDIPI) are disordered. The span at 54-73 (LRQKSERPGRNPKTGEDIPI) shows a compositional bias: basic and acidic residues.

This sequence belongs to the bacterial histone-like protein family. In terms of assembly, heterodimer of an alpha and a beta chain.

Its function is as follows. This protein is one of the two subunits of integration host factor, a specific DNA-binding protein that functions in genetic recombination as well as in transcriptional and translational control. The polypeptide is Integration host factor subunit alpha (Pseudoalteromonas atlantica (strain T6c / ATCC BAA-1087)).